A 1135-amino-acid polypeptide reads, in one-letter code: Eukaryotic translation initiation factor 3 subunit A (1135 aa).

In terms of domain architecture, PCI spans 319-501 (LQRMAAHVLL…NSIYFGTDLT (183 aa)). Basic and acidic residues-rich tracts occupy residues 588-623 (QNNAREEEEARRQEEESRKAKLAEQKRLEQEQEERE) and 829-899 (AAEE…RGGD). Disordered regions lie at residues 588-631 (QNNA…QNEI) and 829-1135 (AAEE…VKRR). Phosphoserine is present on S908. 4 stretches are compositionally biased toward basic and acidic residues: residues 920–971 (ERNE…EPDS), 985–1045 (SRDD…EPQR), 1053–1081 (DAPRNADRENRRPAGERRDRDVRETRGDQ), and 1104–1125 (AREEKPASKRDQPQEKENKAAD).

This sequence belongs to the eIF-3 subunit A family. As to quaternary structure, component of the eukaryotic translation initiation factor 3 (eIF-3) complex. The eIF-3 complex interacts with pix.

It localises to the cytoplasm. In terms of biological role, RNA-binding component of the eukaryotic translation initiation factor 3 (eIF-3) complex, which is involved in protein synthesis of a specialized repertoire of mRNAs and, together with other initiation factors, stimulates binding of mRNA and methionyl-tRNAi to the 40S ribosome. The eIF-3 complex specifically targets and initiates translation of a subset of mRNAs involved in cell proliferation. The protein is Eukaryotic translation initiation factor 3 subunit A of Drosophila erecta (Fruit fly).